The following is a 151-amino-acid chain: Protein SprT-like (151 aa).

The SprT-like domain maps to 7–146; that stretch reads QSLTESIAIK…CGRCGGILKL (140 aa). Zn(2+) is bound at residue His-67. The active site involves Glu-68. His-71 provides a ligand contact to Zn(2+).

This sequence belongs to the SprT family. It depends on Zn(2+) as a cofactor.

The protein localises to the cytoplasm. The sequence is that of Protein SprT-like from Staphylococcus epidermidis (strain ATCC 35984 / DSM 28319 / BCRC 17069 / CCUG 31568 / BM 3577 / RP62A).